Here is a 398-residue protein sequence, read N- to C-terminus: Chalcone synthase (398 aa).

Cys167 is an active-site residue.

Belongs to the thiolase-like superfamily. Chalcone/stilbene synthases family.

It catalyses the reaction (E)-4-coumaroyl-CoA + 3 malonyl-CoA + 3 H(+) = 2',4,4',6'-tetrahydroxychalcone + 3 CO2 + 4 CoA. Its pathway is secondary metabolite biosynthesis; flavonoid biosynthesis. In terms of biological role, the primary product of this enzyme is 4,2',4',6'-tetrahydroxychalcone (also termed naringenin-chalcone or chalcone) which can under specific conditions spontaneously isomerize into naringenin. The polypeptide is Chalcone synthase (CHS) (Callistephus chinensis (China aster)).